The primary structure comprises 179 residues: Peptidyl-prolyl cis-trans isomerase A (179 aa).

Positions 15 to 178 (FFDITIGGVE…KPVVIANCGQ (164 aa)) constitute a PPIase cyclophilin-type domain.

The protein belongs to the cyclophilin-type PPIase family.

The protein localises to the cytoplasm. Its subcellular location is the cytosol. It catalyses the reaction [protein]-peptidylproline (omega=180) = [protein]-peptidylproline (omega=0). Binds cyclosporin A (CsA). CsA mediates some of its effects via an inhibitory action on PPIase. In terms of biological role, PPIase that catalyzes the cis-trans isomerization of proline imidic peptide bonds in oligopeptides and may therefore assist protein folding. This is Peptidyl-prolyl cis-trans isomerase A (ppiA) from Dictyostelium discoideum (Social amoeba).